The following is a 103-amino-acid chain: ATP synthase F(0) complex subunit g, mitochondrial (103 aa).

Alanine 2 bears the N-acetylalanine mark. N6-acetyllysine is present on residues lysine 11, lysine 24, and lysine 54.

Belongs to the ATPase g subunit family. As to quaternary structure, component of the ATP synthase complex composed at least of ATP5F1A/subunit alpha, ATP5F1B/subunit beta, ATP5MC1/subunit c (homooctomer), MT-ATP6/subunit a, MT-ATP8/subunit 8, ATP5ME/subunit e, ATP5MF/subunit f, ATP5MG/subunit g, ATP5MK/subunit k, ATP5MJ/subunit j, ATP5F1C/subunit gamma, ATP5F1D/subunit delta, ATP5F1E/subunit epsilon, ATP5PF/subunit F6, ATP5PB/subunit b, ATP5PD/subunit d, ATP5PO/subunit OSCP. ATP synthase complex consists of a soluble F(1) head domain (subunits alpha(3) and beta(3)) - the catalytic core - and a membrane F(0) domain - the membrane proton channel (subunits c, a, 8, e, f, g, k and j). These two domains are linked by a central stalk (subunits gamma, delta, and epsilon) rotating inside the F1 region and a stationary peripheral stalk (subunits F6, b, d, and OSCP).

It localises to the mitochondrion. The protein localises to the mitochondrion inner membrane. Its function is as follows. Subunit g, of the mitochondrial membrane ATP synthase complex (F(1)F(0) ATP synthase or Complex V) that produces ATP from ADP in the presence of a proton gradient across the membrane which is generated by electron transport complexes of the respiratory chain. ATP synthase complex consist of a soluble F(1) head domain - the catalytic core - and a membrane F(1) domain - the membrane proton channel. These two domains are linked by a central stalk rotating inside the F(1) region and a stationary peripheral stalk. During catalysis, ATP synthesis in the catalytic domain of F(1) is coupled via a rotary mechanism of the central stalk subunits to proton translocation. In vivo, can only synthesize ATP although its ATP hydrolase activity can be activated artificially in vitro. Part of the complex F(0) domain. This is ATP synthase F(0) complex subunit g, mitochondrial from Rattus norvegicus (Rat).